Here is a 256-residue protein sequence, read N- to C-terminus: Triosephosphate isomerase (256 aa).

Asn12–Lys14 provides a ligand contact to substrate. His99 acts as the Electrophile in catalysis. Catalysis depends on Glu169, which acts as the Proton acceptor. Residues Gly175, Ser214, and Gly235–Gly236 each bind substrate.

This sequence belongs to the triosephosphate isomerase family. Homodimer.

It localises to the cytoplasm. It catalyses the reaction D-glyceraldehyde 3-phosphate = dihydroxyacetone phosphate. It functions in the pathway carbohydrate biosynthesis; gluconeogenesis. Its pathway is carbohydrate degradation; glycolysis; D-glyceraldehyde 3-phosphate from glycerone phosphate: step 1/1. Involved in the gluconeogenesis. Catalyzes stereospecifically the conversion of dihydroxyacetone phosphate (DHAP) to D-glyceraldehyde-3-phosphate (G3P). The polypeptide is Triosephosphate isomerase (Mesorhizobium japonicum (strain LMG 29417 / CECT 9101 / MAFF 303099) (Mesorhizobium loti (strain MAFF 303099))).